A 141-amino-acid polypeptide reads, in one-letter code: Venom protein family 1 protein 1 (141 aa).

A signal peptide spans 1–17 (MKSFIVVLCCLFAITYG). Cys62 and Cys139 are oxidised to a cystine.

This sequence belongs to the insect vpf1 family. Expressed by the venom gland (posterior main gland) (at protein level).

Its subcellular location is the secreted. In Platymeris rhadamanthus (Red spot assassin bug), this protein is Venom protein family 1 protein 1.